A 282-amino-acid chain; its full sequence is NH(3)-dependent NAD(+) synthetase (282 aa).

51 to 58 lines the ATP pocket; that stretch reads GISGGVDS. D57 is a binding site for Mg(2+). A deamido-NAD(+)-binding site is contributed by R148. T168 serves as a coordination point for ATP. Residue E173 participates in Mg(2+) binding. Deamido-NAD(+) contacts are provided by K181 and D188. Positions 197 and 219 each coordinate ATP. A deamido-NAD(+)-binding site is contributed by 268–269; the sequence is HK.

The protein belongs to the NAD synthetase family. Homodimer.

It catalyses the reaction deamido-NAD(+) + NH4(+) + ATP = AMP + diphosphate + NAD(+) + H(+). It participates in cofactor biosynthesis; NAD(+) biosynthesis; NAD(+) from deamido-NAD(+) (ammonia route): step 1/1. In terms of biological role, catalyzes the ATP-dependent amidation of deamido-NAD to form NAD. Uses ammonia as a nitrogen source. This Burkholderia cenocepacia (strain HI2424) protein is NH(3)-dependent NAD(+) synthetase.